Consider the following 334-residue polypeptide: D-fructose 1,6-bisphosphatase class 2/sedoheptulose 1,7-bisphosphatase (334 aa).

D33, E57, D85, and E88 together coordinate Mn(2+). Substrate contacts are provided by residues 88-90 (EGT), Y119, 164-166 (RAR), and 186-188 (DGD). Mn(2+) is bound at residue E213.

This sequence belongs to the FBPase class 2 family. In terms of assembly, homotetramer. Mn(2+) serves as cofactor.

The catalysed reaction is beta-D-fructose 1,6-bisphosphate + H2O = beta-D-fructose 6-phosphate + phosphate. The enzyme catalyses D-sedoheptulose 1,7-bisphosphate + H2O = D-sedoheptulose 7-phosphate + phosphate. It participates in carbohydrate biosynthesis; Calvin cycle. In terms of biological role, catalyzes the hydrolysis of fructose 1,6-bisphosphate (Fru 1,6-P2) and sedoheptulose 1,7-bisphosphate (Sed 1,7-P2) to fructose 6-phosphate and sedoheptulose 7-phosphate, respectively. In Synechococcus sp. (strain RCC307), this protein is D-fructose 1,6-bisphosphatase class 2/sedoheptulose 1,7-bisphosphatase.